Consider the following 221-residue polypeptide: Agamous-like MADS-box protein AGL14 (221 aa).

One can recognise an MADS-box domain in the interval 3 to 57 (RGKTEMKRIENATSRQVTFSKRRNGLLKKAFELSVLCDAEVALIIFSPRGKLYEF). The 91-residue stretch at 87–177 (SQQSKDETYG…MEKCEMQGRG (91 aa)) folds into the K-box domain.

In terms of assembly, interacts with AGL16. Preferentially expressed in roots. Expressed in lateral root cap, root epidermis, root endodermis, columella of the root meristematic region, the vascular cylinder in differentiated zones of the primary root and in emerged lateral root primordia. Expressed in pollen.

It localises to the nucleus. Functionally, transcriptional activator that regulates root development by controlling meristem size and patterning of the root apical meristem. Regulates auxin transport and gradients in the root meristematic cells via direct regulation of the auxin efflux carrier PIN1 and PIN4 gene expression. Binds specifically to the CArG-box DNA sequences in the promoter regions of PIN1 and PIN4 genes. Involved in the regulation of shoot apical meristem (SAM) cell identities and transitions. Promotes flowering transition and participates in flower meristem maintenance and determinacy. Positively regulates TFL1 and WUS expression. Binds directly to the TFL1 regulatory sequences. This is Agamous-like MADS-box protein AGL14 from Arabidopsis thaliana (Mouse-ear cress).